Here is a 177-residue protein sequence, read N- to C-terminus: Large ribosomal subunit protein uL6 (177 aa).

Positions 157 to 177 (YKGKGVRYAGEKVRRKEGKKK) are disordered.

It belongs to the universal ribosomal protein uL6 family. Part of the 50S ribosomal subunit.

Functionally, this protein binds to the 23S rRNA, and is important in its secondary structure. It is located near the subunit interface in the base of the L7/L12 stalk, and near the tRNA binding site of the peptidyltransferase center. The polypeptide is Large ribosomal subunit protein uL6 (Caulobacter vibrioides (strain ATCC 19089 / CIP 103742 / CB 15) (Caulobacter crescentus)).